A 442-amino-acid chain; its full sequence is F-box/kelch-repeat protein OR23 (442 aa).

In terms of domain architecture, F-box spans 37–84 (TLIPGLSNDVGRLILSFVPYPHISRIKSTCKSWYAFLSSKTLISLRHS). 6 Kelch repeats span residues 93–139 (LSHL…NFVA), 145–200 (YVYV…AMPG), 204–257 (RIIV…LVEN), 269–328 (EFWV…KIVA), 330–377 (DCGK…ALNG), and 390–437 (LMDT…TTVM).

The chain is F-box/kelch-repeat protein OR23 (OR23) from Arabidopsis thaliana (Mouse-ear cress).